Reading from the N-terminus, the 151-residue chain is MLP-like protein 328 (151 aa).

Belongs to the MLP family.

The chain is MLP-like protein 328 (MLP328) from Arabidopsis thaliana (Mouse-ear cress).